The primary structure comprises 158 residues: MANYIPNDWRDNDITNRYIRYRRTGPHKTTGPTTVYKKLECTKKIERWGIPLTKYRVGIATLEIPPESKLVRLLYGTFGDIRFDQAFVKKIEYINDKDKYISDDYVCTSEIYNLENYPLNFKVGQMVNFIDNDQLNENQHDLEGPGISAYFSKKESKN.

Belongs to the mimivirus L223/L227/L812 family.

This is an uncharacterized protein from Acanthamoeba polyphaga mimivirus (APMV).